The chain runs to 103 residues: Ig kappa-b4 chain C region (103 aa).

In terms of domain architecture, Ig-like spans 5-95 (PTVLIFPPAA…KVTQGTTSVV (91 aa)). A disulfide bridge links C26 with C85.

This chain is Ig kappa-b4 chain C region, found in Oryctolagus cuniculus (Rabbit).